The primary structure comprises 129 residues: Cytochrome c oxidase subunit 5B, mitochondrial (129 aa).

Residues 1-31 constitute a mitochondrion transit peptide; sequence MASRLLRGAGTLAAQALRARGPSGAAAMRSM. Residues lysine 68 and lysine 86 each carry the N6-acetyllysine modification. Zn(2+)-binding residues include cysteine 91, cysteine 93, cysteine 113, and cysteine 116. Lysine 121 carries the post-translational modification N6-acetyllysine.

Belongs to the cytochrome c oxidase subunit 5B family. As to quaternary structure, component of the cytochrome c oxidase (complex IV, CIV), a multisubunit enzyme composed of 14 subunits. The complex is composed of a catalytic core of 3 subunits MT-CO1, MT-CO2 and MT-CO3, encoded in the mitochondrial DNA, and 11 supernumerary subunits COX4I1 (or COX4I2), COX5A, COX5B, COX6A1 (or COX6A2), COX6B1 (or COX6B2), COX6C, COX7A2 (or COX7A1), COX7B, COX7C, COX8A and NDUFA4, which are encoded in the nuclear genome. The complex exists as a monomer or a dimer and forms supercomplexes (SCs) in the inner mitochondrial membrane with NADH-ubiquinone oxidoreductase (complex I, CI) and ubiquinol-cytochrome c oxidoreductase (cytochrome b-c1 complex, complex III, CIII), resulting in different assemblies (supercomplex SCI(1)III(2)IV(1) and megacomplex MCI(2)III(2)IV(2)).

The protein localises to the mitochondrion inner membrane. The protein operates within energy metabolism; oxidative phosphorylation. Its function is as follows. Component of the cytochrome c oxidase, the last enzyme in the mitochondrial electron transport chain which drives oxidative phosphorylation. The respiratory chain contains 3 multisubunit complexes succinate dehydrogenase (complex II, CII), ubiquinol-cytochrome c oxidoreductase (cytochrome b-c1 complex, complex III, CIII) and cytochrome c oxidase (complex IV, CIV), that cooperate to transfer electrons derived from NADH and succinate to molecular oxygen, creating an electrochemical gradient over the inner membrane that drives transmembrane transport and the ATP synthase. Cytochrome c oxidase is the component of the respiratory chain that catalyzes the reduction of oxygen to water. Electrons originating from reduced cytochrome c in the intermembrane space (IMS) are transferred via the dinuclear copper A center (CU(A)) of subunit 2 and heme A of subunit 1 to the active site in subunit 1, a binuclear center (BNC) formed by heme A3 and copper B (CU(B)). The BNC reduces molecular oxygen to 2 water molecules using 4 electrons from cytochrome c in the IMS and 4 protons from the mitochondrial matrix. The sequence is that of Cytochrome c oxidase subunit 5B, mitochondrial (COX5B) from Homo sapiens (Human).